Consider the following 599-residue polypeptide: Afamin (599 aa).

The first 21 residues, 1–21, serve as a signal peptide directing secretion; sequence MKLLKLTGFIFFLFFLTESLT. 3 Albumin domains span residues 22–210, 211–403, and 404–599; these read LPTQ…IPVT, QYLK…KFNE, and TTEK…KIGN. N33 carries an N-linked (GlcNAc...) (complex) asparagine glycan. 11 disulfide bridges follow: C77–C86, C99–C114, C113–C124, C148–C193, C192–C201, C224–C270, C269–C277, C289–C303, C302–C313, C340–C385, and C384–C393. N109 carries an N-linked (GlcNAc...) (complex) asparagine glycan. The tract at residues 215–319 is binding pocket for hydrophobic ligands; the sequence is AFSSYQKHVC…RGQCIINSNK (105 aa). N-linked (GlcNAc...) (complex) asparagine; atypical glycosylation is present at N383. A glycan (N-linked (GlcNAc...) (complex) asparagine) is linked at N402. 6 disulfide bridges follow: C416/C462, C461/C470, C483/C499, C498/C509, C536/C581, and C580/C589. A glycan (N-linked (GlcNAc...) asparagine) is linked at N488.

Belongs to the ALB/AFP/VDB family. Forms a 1:1 complex with Wnt family members; interacts with WNT1, WNT2B, WNT3, WNT3A, WNT5A, WNT7A, WNT7B, WNT8, WNT9A, WNT9B, WNT10A and WNT10B. N-glycosylated; more than 90% of the glycans are sialylated. In terms of tissue distribution, high level detected in plasma but also in extravascular fluids such as follicular and cerebrospinal fluids (at protein level).

It localises to the secreted. Functionally, functions as a carrier for hydrophobic molecules in body fluids. Essential for the solubility and activity of lipidated Wnt family members, including WNT1, WNT2B, WNT3, WNT3A, WNT5A, WNT7A, WNT7B, WNT8, WNT9A, WNT9B, WNT10A and WNT10B. Binds vitamin E. May transport vitamin E in body fluids under conditions where the lipoprotein system is not sufficient. May be involved in the transport of vitamin E across the blood-brain barrier. The chain is Afamin (AFM) from Homo sapiens (Human).